The primary structure comprises 271 residues: Elongation factor Ts (271 aa).

Positions 76–79 (TDFV) are involved in Mg(2+) ion dislocation from EF-Tu.

The protein belongs to the EF-Ts family.

The protein localises to the cytoplasm. In terms of biological role, associates with the EF-Tu.GDP complex and induces the exchange of GDP to GTP. It remains bound to the aminoacyl-tRNA.EF-Tu.GTP complex up to the GTP hydrolysis stage on the ribosome. The protein is Elongation factor Ts of Mycobacterium bovis (strain BCG / Pasteur 1173P2).